The following is a 1280-amino-acid chain: Pullulanase A (1280 aa).

The signal sequence occupies residues 1–44 (MRKTPSHTEKKMVYSIRSLKNGTGSVLIGASLVLLAMATPTISS). Positions 42-132 (ISSDESTPTT…VTTETKAEEP (91 aa)) are disordered. The segment covering 48-61 (TPTTNEPNNRNTTT) has biased composition (low complexity). Residues 79-90 (DISSPGNANASL) show a composition bias toward polar residues. Over residues 115–126 (EPTTSTSPVTTE) the composition is skewed to low complexity. Substrate is bound by residues 156-158 (WTW), Trp-168, Asp-214, 263-265 (WYW), Trp-276, Lys-318, and Asn-323. 2 residues coordinate Ca(2+): Ser-661 and Tyr-663. Residues 667–668 (YD) and Phe-743 contribute to the substrate site. The active-site Nucleophile is the Asp-778. Glu-807 acts as the Proton donor in catalysis. Trp-809 is a substrate binding site. The Ca(2+) site is built by Met-828, Thr-831, and Asp-832. Substrate contacts are provided by Asp-839, Arg-842, and Tyr-849. Residues Asp-882 and Asp-886 each contribute to the Ca(2+) site. Residues Asn-896, Lys-969, and 989-991 (DSY) each bind substrate. Position 992 (Asp-992) interacts with Ca(2+). A disordered region spans residues 1140–1248 (VSQNGTSHES…TPDKQAELPN (109 aa)). Residues 1149–1196 (STAEEKPDSTPSKPEHQNEASHPAHQDPAPEARPDSTKPDAKVADAEN) are compositionally biased toward basic and acidic residues. Low complexity predominate over residues 1205 to 1218 (SQAEQPAQEAQASS). Residues 1246–1250 (LPNTG) carry the LPXTG sorting signal motif. Thr-1249 is subject to Pentaglycyl murein peptidoglycan amidated threonine. Positions 1250–1280 (GIKNENKLLFAGISLLALLGLGFLLKNKKEN) are cleaved as a propeptide — removed by sortase.

It belongs to the glycosyl hydrolase 13 family.

The protein localises to the secreted. The protein resides in the cell wall. It is found in the cell surface. It catalyses the reaction Hydrolysis of (1-&gt;6)-alpha-D-glucosidic linkages in pullulan, amylopectin and glycogen, and in the alpha- and beta-limit dextrins of amylopectin and glycogen.. Inhibited by 4-O-alpha-D-glucopyranosylmoranoline (G1M). Functionally, virulence factor. Involved in the degradation of glycogen of the mammalian host cells. Hydrolyzes the alpha-1,6-branchpoints of glycogen. Hydrolyzes pullulan. Does not hydrolyze dextran. Binds to mouse lung alveolar type II cells that are rich in glycogen stores. Is an alpha-glucan-specific carbohydrate-binding protein, which binds to amylose (pure alpha-(1,4)-linked glucose), amylopectin (alpha-(1,4)-linked glucose with alpha-(1,6) branch points), pullulan (linear polymer of mixed alpha-(1,4)- and alpha-(1,6)-linked glucose) and glycogen (similar to amylopectin with more frequent alpha-(1,6) branch points) in vitro. Does not bind to dextran (a linear polymer of alpha-(1,6)-linked glucose). In Streptococcus pneumoniae serotype 4 (strain ATCC BAA-334 / TIGR4), this protein is Pullulanase A.